A 293-amino-acid polypeptide reads, in one-letter code: Ribonuclease Z (293 aa).

Residues His60, His62, Asp64, His65, His132, Asp200, and His256 each contribute to the Zn(2+) site. Asp64 functions as the Proton acceptor in the catalytic mechanism.

This sequence belongs to the RNase Z family. As to quaternary structure, homodimer. The cofactor is Zn(2+).

It carries out the reaction Endonucleolytic cleavage of RNA, removing extra 3' nucleotides from tRNA precursor, generating 3' termini of tRNAs. A 3'-hydroxy group is left at the tRNA terminus and a 5'-phosphoryl group is left at the trailer molecule.. In terms of biological role, zinc phosphodiesterase, which displays some tRNA 3'-processing endonuclease activity. Probably involved in tRNA maturation, by removing a 3'-trailer from precursor tRNA. In Sulfurisphaera tokodaii (strain DSM 16993 / JCM 10545 / NBRC 100140 / 7) (Sulfolobus tokodaii), this protein is Ribonuclease Z.